The primary structure comprises 120 residues: Large ribosomal subunit protein bL12 (120 aa).

It belongs to the bacterial ribosomal protein bL12 family. In terms of assembly, homodimer. Part of the ribosomal stalk of the 50S ribosomal subunit. Forms a multimeric L10(L12)X complex, where L10 forms an elongated spine to which 2 to 4 L12 dimers bind in a sequential fashion. Binds GTP-bound translation factors.

In terms of biological role, forms part of the ribosomal stalk which helps the ribosome interact with GTP-bound translation factors. Is thus essential for accurate translation. The protein is Large ribosomal subunit protein bL12 of Listeria monocytogenes serovar 1/2a (strain ATCC BAA-679 / EGD-e).